The sequence spans 486 residues: Cardiolipin synthase A (486 aa).

The next 2 helical transmembrane spans lie at Thr-3–Val-23 and Met-38–Phe-58. PLD phosphodiesterase domains are found at residues Met-219–Arg-246 and Glu-399–Ser-426. Catalysis depends on residues His-224, Lys-226, Asp-231, His-404, Lys-406, and Asp-411.

It belongs to the phospholipase D family. Cardiolipin synthase subfamily. ClsA sub-subfamily.

It is found in the cell inner membrane. It catalyses the reaction 2 a 1,2-diacyl-sn-glycero-3-phospho-(1'-sn-glycerol) = a cardiolipin + glycerol. Catalyzes the reversible phosphatidyl group transfer from one phosphatidylglycerol molecule to another to form cardiolipin (CL) (diphosphatidylglycerol) and glycerol. In Escherichia fergusonii (strain ATCC 35469 / DSM 13698 / CCUG 18766 / IAM 14443 / JCM 21226 / LMG 7866 / NBRC 102419 / NCTC 12128 / CDC 0568-73), this protein is Cardiolipin synthase A.